The sequence spans 241 residues: Centromere protein H (241 aa).

Residue M1 is modified to N-acetylmethionine. The disordered stretch occupies residues 1–24 (MEEQPRERSEAGAEACEEKRGLSQ). Residues 28–186 (ERIEDRISLL…KEDVDKMENS (159 aa)) are a coiled coil. A Glycyl lysine isopeptide (Lys-Gly) (interchain with G-Cter in SUMO2) cross-link involves residue K61. At T62 the chain carries Phosphothreonine.

Belongs to the CENP-H/MCM16 family. In terms of assembly, self-associates. Component of the CENPA-NAC complex, at least composed of CENPA, CENPC, CENPH, CENPM, CENPN, CENPT and CENPU. The CENPA-NAC complex interacts with the CENPA-CAD complex, composed of CENPI, CENPK, CENPL, CENPO, CENPP, CENPQ, CENPR and CENPS. Interacts directly with CENPK. Interacts with KIF2C and NDC80. Interacts with TRIM36. As to expression, abundantly expressed in thymus, spleen, uterus, ovary, testis and muscle, and weakly expressed in small intestine, lung and stomach. Barely detectable expression in kidney, liver, skin and prostate gland. Not detected in brain, heart or adrenal gland. Also expressed weakly in various hematopoietic cell lines.

The protein localises to the nucleus. Its subcellular location is the chromosome. The protein resides in the centromere. It is found in the kinetochore. Its function is as follows. Component of the CENPA-NAC (nucleosome-associated) complex, a complex that plays a central role in assembly of kinetochore proteins, mitotic progression and chromosome segregation. The CENPA-NAC complex recruits the CENPA-CAD (nucleosome distal) complex and may be involved in incorporation of newly synthesized CENPA into centromeres. Required for chromosome congression and efficiently align the chromosomes on a metaphase plate. The polypeptide is Centromere protein H (Mus musculus (Mouse)).